A 449-amino-acid polypeptide reads, in one-letter code: XK-related protein 2 (449 aa).

10 helical membrane-spanning segments follow: residues 35 to 55, 68 to 88, 98 to 118, 174 to 194, 202 to 222, 241 to 261, 269 to 289, 306 to 326, 357 to 377, and 382 to 402; these read FSILFSTFLYCGEAASALYMV, TYTFSFFMFSSIMVQLTLIFV, LSLFMHLILLGPVIRCLEAMI, IQAFLGSVPQLTYQLYVSLIS, VVLMVFSLVSVTYGATLCNML, LCITIWRTLEITSRLLILVLF, AVPFLVLNFLIILFEPWIKFW, VGTLVVLISVTILYAGINFSC, LVENVIMVLVFKFFGVKVLLN, and LIALQLIIAYLISIGFMLLFF.

Belongs to the XK family. Expressed predominantly in the placenta, in syncytiotrophoblasts. Moderate levels in the adrenal gland, low levels in the trachea and very low levels in the bone marrow.

It is found in the cell membrane. This chain is XK-related protein 2 (XKRX), found in Homo sapiens (Human).